A 419-amino-acid chain; its full sequence is Phosphoribosylamine--glycine ligase (419 aa).

In terms of domain architecture, ATP-grasp spans 109–311 (KQLLIEAGVP…LEKVLMACVE (203 aa)). 135–191 (ATKMGAPIVVKADGLAAGKGVIVAQTSAEATTAIAELFDQGFEKIVVEEFLPGEEVS) lines the ATP pocket. Glu281 and Asn283 together coordinate Mg(2+).

It belongs to the GARS family. It depends on Mg(2+) as a cofactor. Mn(2+) is required as a cofactor.

The catalysed reaction is 5-phospho-beta-D-ribosylamine + glycine + ATP = N(1)-(5-phospho-beta-D-ribosyl)glycinamide + ADP + phosphate + H(+). Its pathway is purine metabolism; IMP biosynthesis via de novo pathway; N(1)-(5-phospho-D-ribosyl)glycinamide from 5-phospho-alpha-D-ribose 1-diphosphate: step 2/2. This Synechocystis sp. (strain ATCC 27184 / PCC 6803 / Kazusa) protein is Phosphoribosylamine--glycine ligase.